The primary structure comprises 205 residues: Protein N-terminal glutamine amidohydrolase (205 aa).

Catalysis depends on residues Cys-28, His-81, and Asp-97.

Belongs to the NTAQ1 family. In terms of assembly, monomer.

The protein resides in the cytoplasm. Its subcellular location is the cytosol. It localises to the nucleus. It catalyses the reaction N-terminal L-glutaminyl-[protein] + H2O = N-terminal L-glutamyl-[protein] + NH4(+). Mediates the side-chain deamidation of N-terminal glutamine residues to glutamate, an important step in N-end rule pathway of protein degradation. Conversion of the resulting N-terminal glutamine to glutamate renders the protein susceptible to arginylation, polyubiquitination and degradation as specified by the N-end rule. Does not act on substrates with internal or C-terminal glutamine and does not act on non-glutamine residues in any position. Does not deaminate acetylated N-terminal glutamine. With the exception of proline, all tested second-position residues on substrate peptides do not greatly influence the activity. In contrast, a proline at position 2, virtually abolishes deamidation of N-terminal glutamine. This is Protein N-terminal glutamine amidohydrolase from Homo sapiens (Human).